Reading from the N-terminus, the 229-residue chain is UPF0228 protein MA_3119 (229 aa).

The span at 35-66 shows a compositional bias: low complexity; the sequence is STPVNTSTPVNTSTPVNTSTPVNTSTPVSTST. Positions 35 to 67 are disordered; sequence STPVNTSTPVNTSTPVNTSTPVNTSTPVSTSTI.

It belongs to the UPF0228 family.

This chain is UPF0228 protein MA_3119, found in Methanosarcina acetivorans (strain ATCC 35395 / DSM 2834 / JCM 12185 / C2A).